A 207-amino-acid chain; its full sequence is Protein Nef (207 aa).

The N-myristoyl glycine; by host moiety is linked to residue Gly2. A Phosphoserine; by host modification is found at Ser6. An acidic; interacts with host PACS1 and PACS2; stabilizes the interaction of NEF/MHC-I with host AP1M1; necessary for MHC-I internalization region spans residues Glu62–Glu66. The segment at Pro70–Pro79 is SH3-binding; interaction with Src family tyrosine kinases. The short motif at Pro73–Pro76 is the PxxP; stabilizes the interaction of NEF/MHC-I with host AP1M1; necessary for MHC-I internalization element. Residues Glu109–Trp125 are mediates dimerization, Nef-PTE1 interaction. Residues Met149–Val181 are binding to ATP6V1H. A Dileucine internalization motif; necessary for CD4 internalization motif is present at residues Leu165 to Leu166. A Diacidic; necessary for CD4 internalization motif is present at residues Glu175–Asp176.

The protein belongs to the lentivirus primate group Nef protein family. As to quaternary structure, monomer; cytosolic form. Homodimer; membrane bound form. Interacts with Nef associated p21-activated kinase (PAK2); this interaction activates PAK2. Associates with the Nef-MHC-I-AP1 complex; this complex is required for MHC-I internalization. Interacts (via C-terminus) with host PI3-kinase. Interacts with host PACS1; this interaction seems to be weak. Interacts with host PACS2. Interacts with host LCK and MAPK3; these interactions inhibit the kinase activity of the latter. Interacts with host ATP6V1H; this interaction may play a role in CD4 endocytosis. Associates with the CD4-Nef-AP2 complex; this complex is required for CD4 internalization. Interacts with host AP2 subunit alpha and AP2 subunit sigma2. Interacts with TCR-zeta chain; this interaction up-regulates the Fas ligand (FasL) surface expression. Interacts with host HCK, LYN, and SRC; these interactions activate the Src family kinases. Interacts with MAP3K5; this interaction inhibits the Fas and TNFR-mediated death signals. Interacts with beta-COP and PTE1. Interacts with human RACK1; this increases Nef phosphorylation by PKC. Interacts with TP53; this interaction decreases the half-life of TP53, protecting the infected cell against p53-mediated apoptosis. In terms of processing, the virion-associated Nef proteins are cleaved by the viral protease to release the soluble C-terminal core protein. Nef is probably cleaved concomitantly with viral structural proteins on maturation of virus particles. Post-translationally, myristoylated. Phosphorylated on serine residues, probably by host PKCdelta and theta.

It localises to the host cell membrane. It is found in the virion. The protein localises to the secreted. The protein resides in the host Golgi apparatus membrane. Functionally, factor of infectivity and pathogenicity, required for optimal virus replication. Alters numerous pathways of T-lymphocyte function and down-regulates immunity surface molecules in order to evade host defense and increase viral infectivity. Alters the functionality of other immunity cells, like dendritic cells, monocytes/macrophages and NK cells. Its function is as follows. In infected CD4(+) T-lymphocytes, down-regulates the surface MHC-I, mature MHC-II, CD4, CD28, CCR5 and CXCR4 molecules. Mediates internalization and degradation of host CD4 through the interaction of with the cytoplasmic tail of CD4, the recruitment of AP-2 (clathrin adapter protein complex 2), internalization through clathrin coated pits, and subsequent transport to endosomes and lysosomes for degradation. Diverts host MHC-I molecules to the trans-Golgi network-associated endosomal compartments by an endocytic pathway to finally target them for degradation. MHC-I down-regulation may involve AP-1 (clathrin adapter protein complex 1) or possibly Src family kinase-ZAP70/Syk-PI3K cascade recruited by PACS2. In consequence infected cells are masked for immune recognition by cytotoxic T-lymphocytes. Decreasing the number of immune receptors also prevents reinfection by more HIV particles (superinfection). Down-regulates host SERINC3 and SERINC5 thereby excluding these proteins from the viral particles. Virion infectivity is drastically higher when SERINC3 or SERINC5 are excluded from the viral envelope, because these host antiviral proteins impair the membrane fusion event necessary for subsequent virion penetration. In terms of biological role, bypasses host T-cell signaling by inducing a transcriptional program nearly identical to that of anti-CD3 cell activation. Interaction with TCR-zeta chain up-regulates the Fas ligand (FasL). Increasing surface FasL molecules and decreasing surface MHC-I molecules on infected CD4(+) cells send attacking cytotoxic CD8+ T-lymphocytes into apoptosis. Plays a role in optimizing the host cell environment for viral replication without causing cell death by apoptosis. Protects the infected cells from apoptosis in order to keep them alive until the next virus generation is ready to strike. Inhibits the Fas and TNFR-mediated death signals by blocking MAP3K5/ASK1. Decreases the half-life of TP53, protecting the infected cell against p53-mediated apoptosis. Inhibits the apoptotic signals regulated by the Bcl-2 family proteins through the formation of a Nef/PI3-kinase/PAK2 complex that leads to activation of PAK2 and induces phosphorylation of host BAD. Functionally, extracellular Nef protein targets CD4(+) T-lymphocytes for apoptosis by interacting with CXCR4 surface receptors. In Homo sapiens (Human), this protein is Protein Nef.